The following is a 49-amino-acid chain: MRVNITLACTECGERNYITSKNKRNNPERLELKKYCPRDRKVTLHRETK.

The protein belongs to the bacterial ribosomal protein bL33 family.

This chain is Large ribosomal subunit protein bL33B, found in Geobacillus kaustophilus (strain HTA426).